The sequence spans 591 residues: Aspartate--tRNA(Asp/Asn) ligase (591 aa).

L-aspartate is bound at residue E174. Residues Q198–K201 are aspartate. R220 provides a ligand contact to L-aspartate. Residues R220 to E222 and Q229 each bind ATP. H450 lines the L-aspartate pocket. E483 provides a ligand contact to ATP. Residue R490 participates in L-aspartate binding. G535–R538 is a binding site for ATP.

It belongs to the class-II aminoacyl-tRNA synthetase family. Type 1 subfamily. Homodimer.

The protein localises to the cytoplasm. The catalysed reaction is tRNA(Asx) + L-aspartate + ATP = L-aspartyl-tRNA(Asx) + AMP + diphosphate. Aspartyl-tRNA synthetase with relaxed tRNA specificity since it is able to aspartylate not only its cognate tRNA(Asp) but also tRNA(Asn). Reaction proceeds in two steps: L-aspartate is first activated by ATP to form Asp-AMP and then transferred to the acceptor end of tRNA(Asp/Asn). This chain is Aspartate--tRNA(Asp/Asn) ligase, found in Pseudomonas putida (strain GB-1).